The sequence spans 31 residues: Putative translational regulatory protein ArgL (31 aa).

Functionally, may serve a regulatory role in expression of downstream gene argF; in an argL-argF-lacZ fusion mutation of the start codon to a stop codon in argL increases expression of beta-galactosidase. In Escherichia coli (strain K12), this protein is Putative translational regulatory protein ArgL.